The chain runs to 145 residues: Transcription antitermination protein NusB (145 aa).

The protein belongs to the NusB family.

Functionally, involved in transcription antitermination. Required for transcription of ribosomal RNA (rRNA) genes. Binds specifically to the boxA antiterminator sequence of the ribosomal RNA (rrn) operons. The protein is Transcription antitermination protein NusB of Citrifermentans bemidjiense (strain ATCC BAA-1014 / DSM 16622 / JCM 12645 / Bem) (Geobacter bemidjiensis).